The chain runs to 456 residues: tRNA-2-methylthio-N(6)-dimethylallyladenosine synthase (456 aa).

The region spanning 19–136 (LTFNVQTFGC…LAELIYARHT (118 aa)) is the MTTase N-terminal domain. 6 residues coordinate [4Fe-4S] cluster: Cys-28, Cys-63, Cys-97, Cys-173, Cys-177, and Cys-180. One can recognise a Radical SAM core domain in the interval 159 to 389 (QKYKFKAGVN…LTTIRESSSK (231 aa)). A TRAM domain is found at 392–455 (KDDEGKIAEV…GFYYMGEMME (64 aa)).

The protein belongs to the methylthiotransferase family. MiaB subfamily. In terms of assembly, monomer. [4Fe-4S] cluster serves as cofactor.

The protein resides in the cytoplasm. It catalyses the reaction N(6)-dimethylallyladenosine(37) in tRNA + (sulfur carrier)-SH + AH2 + 2 S-adenosyl-L-methionine = 2-methylsulfanyl-N(6)-dimethylallyladenosine(37) in tRNA + (sulfur carrier)-H + 5'-deoxyadenosine + L-methionine + A + S-adenosyl-L-homocysteine + 2 H(+). Functionally, catalyzes the methylthiolation of N6-(dimethylallyl)adenosine (i(6)A), leading to the formation of 2-methylthio-N6-(dimethylallyl)adenosine (ms(2)i(6)A) at position 37 in tRNAs that read codons beginning with uridine. This Lachnoclostridium phytofermentans (strain ATCC 700394 / DSM 18823 / ISDg) (Clostridium phytofermentans) protein is tRNA-2-methylthio-N(6)-dimethylallyladenosine synthase.